A 716-amino-acid polypeptide reads, in one-letter code: MFNVTKKSIEWGGETLTLETGKVARQADGSVIATLGETSVMANVTFAKAAKPGQDFFPLTVHYQERYYAAGKVPGGFFKREARPSEKETLTSRLIDRPIRPLFVDGFKNEVLLIVTVLSHDLVNEPDIVAMIAASAALTISGVPFMGPIGAARVGFAGGEYVLNPDVDDMQKLRENPEQRLDLVIAGTKDAVMMVESEAYELSEAEMLGAVKFGHEAMQPVIDMIIDFAEEAAHEPFDFSPPDYAALYAKVKSLGETQMRAAFAIREKQDRVNAIDAARAAIKAQLSEAELADENLGTAFKKLESSILRGDIINGGARIDGRDTKTVRPIISETSVLPRTHGSALFTRGETQALVVTTLGTGEDEQIIDALHGNSRSNFLLHYNFPPYSVGEVGRFGPPGRREIGHGKLAWRALQAVLPAATDFPYTIRVVSEITESNGSSSMASVCGGSLSMMDAGVPLKAPVAGVAMGLILEDDGKWAVLTDILGDEDHLGDMDFKVAGTENGITSLQMDIKVAGITPEIMEQALAQAKDGRMHILGEMSKALSSANSFSAYAPKIETLTIPTDKIREVIGSGGKVIREIVETSGAKVDINDDGVIKIASNDQAAIKKAYDMIWSIVAEPEEGQIYTGKVVKLVDFGAFVNFFGKRDGLVHVSQIANKRLTHPNEVLKEGQEVKVKLLGFDERGKVRLGMKMVDQETGQEIQPEKKEKEEAGEA.

Residues Asp490 and Asp496 each contribute to the Mg(2+) site. In terms of domain architecture, KH spans 556–615; that stretch reads PKIETLTIPTDKIREVIGSGGKVIREIVETSGAKVDINDDGVIKIASNDQAAIKKAYDMI. Residues 625–693 form the S1 motif domain; sequence GQIYTGKVVK…ERGKVRLGMK (69 aa). A disordered region spans residues 695–716; sequence VDQETGQEIQPEKKEKEEAGEA. Over residues 704–716 the composition is skewed to basic and acidic residues; sequence QPEKKEKEEAGEA.

The protein belongs to the polyribonucleotide nucleotidyltransferase family. Mg(2+) is required as a cofactor.

The protein localises to the cytoplasm. The catalysed reaction is RNA(n+1) + phosphate = RNA(n) + a ribonucleoside 5'-diphosphate. Functionally, involved in mRNA degradation. Catalyzes the phosphorolysis of single-stranded polyribonucleotides processively in the 3'- to 5'-direction. In Cereibacter sphaeroides (strain ATCC 17029 / ATH 2.4.9) (Rhodobacter sphaeroides), this protein is Polyribonucleotide nucleotidyltransferase.